The following is a 582-amino-acid chain: uncharacterized protein (582 aa).

The next 6 membrane-spanning stretches (helical) occupy residues 17 to 37, 57 to 77, 131 to 151, 156 to 176, 239 to 259, and 271 to 291; these read VAMLMMLQLVSTLASLYLPTV, LGAVMLGVTGLQVLCAIGAVY, MTATVLVTAPIMCVGGIIMAI, ALTWLLLVSVPILAVANYWII, ALMLPVTTLTINASSVALIWF, and VGSLIAFLSYFAQILMAVLMA. The ABC transmembrane type-1 domain maps to 17 to 300; the sequence is VAMLMMLQLV…ATMTLAVLPR (284 aa). An ABC transporter domain is found at 335 to 571; that stretch reads VRLAGATFTY…CPTYAEFAAS (237 aa). 369–376 provides a ligand contact to ATP; the sequence is GSTGSGKS.

Belongs to the ABC transporter superfamily. MsbA family.

The protein localises to the cell membrane. This is an uncharacterized protein from Mycobacterium bovis (strain ATCC BAA-935 / AF2122/97).